The sequence spans 149 residues: Large ribosomal subunit protein bL9 (149 aa).

Belongs to the bacterial ribosomal protein bL9 family.

Functionally, binds to the 23S rRNA. This chain is Large ribosomal subunit protein bL9 (rplI), found in Geobacillus stearothermophilus (Bacillus stearothermophilus).